The primary structure comprises 120 residues: Holo-[acyl-carrier-protein] synthase (120 aa).

Mg(2+)-binding residues include aspartate 8 and glutamate 58.

This sequence belongs to the P-Pant transferase superfamily. AcpS family. Mg(2+) is required as a cofactor.

The protein resides in the cytoplasm. The enzyme catalyses apo-[ACP] + CoA = holo-[ACP] + adenosine 3',5'-bisphosphate + H(+). Functionally, transfers the 4'-phosphopantetheine moiety from coenzyme A to a Ser of acyl-carrier-protein. The protein is Holo-[acyl-carrier-protein] synthase of Anoxybacillus flavithermus (strain DSM 21510 / WK1).